We begin with the raw amino-acid sequence, 372 residues long: Fork head domain-containing protein FD4 (372 aa).

A DNA-binding region (fork-head) is located at residues 12 to 103 (QKPPYSYISL…FDMFENGSLL (92 aa)). 2 disordered regions span residues 225-245 (ESLI…DEDD) and 261-281 (PTTP…RTED).

In terms of tissue distribution, expressed in early embryogenesis in 14 symmetrical pairs of segmentally arranged neuroblasts. Also, later in embryogenesis, in a cluster of cells in head region.

The protein localises to the nucleus. Its function is as follows. Involved in development during embryogenesis. This is Fork head domain-containing protein FD4 (fd96Ca) from Drosophila melanogaster (Fruit fly).